Consider the following 136-residue polypeptide: MARTKQTARKSTGGKAPRKQLASKAARKAAPATGGVKKPHRYRPPTVALREIRRYQKSTELLIRKLPFQRLVREIAQDFKTDLRFQSSAIGALQEAVEAYLVSLFEDTNLCAIHGKRVTIQPKDMQLARRLRGERS.

The disordered stretch occupies residues 1–45; the sequence is MARTKQTARKSTGGKAPRKQLASKAARKAAPATGGVKKPHRYRPP. K5 carries the post-translational modification N6,N6,N6-trimethyllysine; alternate. The residue at position 5 (K5) is an N6,N6-dimethyllysine; alternate. An N6-methyllysine; alternate mark is found at K5 and K10. The residue at position 10 (K10) is an N6-acetyllysine; alternate. Phosphoserine is present on S11. K15 bears the N6,N6-dimethyllysine; alternate mark. 5 positions are modified to N6-acetyllysine; alternate: K15, K19, K24, K28, and K37. K19, K24, K28, and K37 each carry N6-methyllysine; alternate. Residues 19–32 are compositionally biased toward low complexity; the sequence is KQLASKAARKAAPA. 2 positions are modified to N6,N6,N6-trimethyllysine; alternate: K28 and K37. N6,N6-dimethyllysine; alternate is present on residues K28 and K37. 2 positions are modified to N6-acetyllysine: K57 and K65. Residue K80 is modified to N6,N6,N6-trimethyllysine; alternate. K80 is subject to N6,N6-dimethyllysine; alternate. The residue at position 80 (K80) is an N6-methyllysine; alternate. An N6-acetyllysine modification is found at K123.

This sequence belongs to the histone H3 family. As to quaternary structure, the nucleosome is a histone octamer containing two molecules each of H2A, H2B, H3 and H4 assembled in one H3-H4 heterotetramer and two H2A-H2B heterodimers. The octamer wraps approximately 147 bp of DNA. In terms of processing, phosphorylated by ark1 to form H3S10ph in a cell cycle-dependent manner during mitosis and meiosis. H3S10ph is also formed by ssp2, promotes subsequent H3K14ac formation by gcn5, and is required for transcriptional activation through TBP recruitment to the promoters. Dephosphorylation is performed by sds21. Post-translationally, mono-, di- and trimethylated by the COMPASS complex to form H3K4me1/2/3. H3K4me activates gene expression by regulating transcription elongation and plays a role in telomere length maintenance. H3K4me enrichment correlates with transcription levels, and occurs in a 5' to 3' gradient with H3K4me3 enrichment at the 5'-end of genes, shifting to H3K4me2 and then H3K4me1. Methylated by clr4 to form H3K9me1. H3K9me1 represents a specific tag for epigenetic transcriptional repression by recruiting swi6/HP1 to methylated histones. Targeting to histone probably involves clr3 and rik1. Essential for silencing of centromeres and directional switching of the mating type. Methylated by set2 to form H3K36me. H3K36me represses gene expression. Methylated by dot1 to form H3K79me. H3K79me is required for association of SIR proteins with telomeric regions and for telomeric silencing. The COMPASS-mediated formation of H3K4me2/3 and the dot1-mediated formation of H3K79me require H2BK123ub1. Acetylation of histone H3 leads to transcriptional activation. H3K14ac formation by gcn5 is promoted by H3S10ph. H3K14ac can also be formed by esa1. H3K56ac formation occurs predominantly in newly synthesized H3 molecules during G1, S and G2/M of the cell cycle and may be involved in DNA repair. Acetylation at Lys-123 (H3K122ac) plays a central role in chromatin structure: localizes at the surface of the histone octamer and stimulates transcription, possibly by promoting nucleosome instability.

The protein resides in the nucleus. It is found in the chromosome. Core component of nucleosome. Nucleosomes wrap and compact DNA into chromatin, limiting DNA accessibility to the cellular machineries which require DNA as a template. Histones thereby play a central role in transcription regulation, DNA repair, DNA replication and chromosomal stability. DNA accessibility is regulated via a complex set of post-translational modifications of histones, also called histone code, and nucleosome remodeling. This chain is Histone H3.3 (hht3), found in Schizosaccharomyces pombe (strain 972 / ATCC 24843) (Fission yeast).